The chain runs to 210 residues: Uracil phosphoribosyltransferase (210 aa).

Residues arginine 78, arginine 103, and 130 to 138 contribute to the 5-phospho-alpha-D-ribose 1-diphosphate site; that span reads DPMLATGGS. Uracil-binding positions include isoleucine 195 and 200–202; that span reads GDA. Aspartate 201 is a 5-phospho-alpha-D-ribose 1-diphosphate binding site.

The protein belongs to the UPRTase family. The cofactor is Mg(2+).

It carries out the reaction UMP + diphosphate = 5-phospho-alpha-D-ribose 1-diphosphate + uracil. Its pathway is pyrimidine metabolism; UMP biosynthesis via salvage pathway; UMP from uracil: step 1/1. Its activity is regulated as follows. Allosterically activated by GTP. Functionally, catalyzes the conversion of uracil and 5-phospho-alpha-D-ribose 1-diphosphate (PRPP) to UMP and diphosphate. This is Uracil phosphoribosyltransferase from Leifsonia xyli subsp. xyli (strain CTCB07).